We begin with the raw amino-acid sequence, 694 residues long: Elongation factor G (694 aa).

Positions 8 to 282 constitute a tr-type G domain; the sequence is KDYRNIGIMA…AVIDYLPSPV (275 aa). GTP is bound by residues 17–24, 81–85, and 135–138; these read AHIDAGKT, DTPGH, and NKMD.

This sequence belongs to the TRAFAC class translation factor GTPase superfamily. Classic translation factor GTPase family. EF-G/EF-2 subfamily.

Its subcellular location is the cytoplasm. In terms of biological role, catalyzes the GTP-dependent ribosomal translocation step during translation elongation. During this step, the ribosome changes from the pre-translocational (PRE) to the post-translocational (POST) state as the newly formed A-site-bound peptidyl-tRNA and P-site-bound deacylated tRNA move to the P and E sites, respectively. Catalyzes the coordinated movement of the two tRNA molecules, the mRNA and conformational changes in the ribosome. This is Elongation factor G from Mesomycoplasma hyopneumoniae (strain J / ATCC 25934 / NCTC 10110) (Mycoplasma hyopneumoniae).